The primary structure comprises 511 residues: MLTMGTALSQQVDANWQTYIMIAVYFLILMLLAFTYKQATGNLSEYMLGGRSIGPYITALSAGASDMSGWMIMGLPGSVYSTGLSAMWITIGLTLGAYINYFVVAPRLRVYTELAGDAITLPDFFKNRLNDKNNVLKIISGLIIVVFFTLYTHSGFVSGGKLFESAFGLDYHFGLILVAFIVIFYTFFGGYLAVSITDFFQGVIMLIAMVMVPIVAMMNLNGWGTFHDVAAMKPTNLNLFKGLSFIGIISLFSWGLGYFGQPHIIVRFMSIKSHKMLPKARRLGISWMAVGLLGAVAVGLTGIAFVPAYHIKLEDPETLFIVMSQVLFHPLVGGFLLAAILAAIMSTISSQLLVTSSSLTEDFYKLIRGEEKAKTDQKEFVMIGRLSVLVVAIVAIAIAWNPNDTILNLVGNAWAGFGASFSPLVLFALYWKGLTRAGAVSGMVSGALVVIVWIAWIKPLAHINEIFGLYEIIPGFIVSVIVTYVVSKLTKKPGAFVETDLNKVRDIVREK.

A run of 13 helical transmembrane segments spans residues 16–36 (WQTY…AFTY), 53–73 (IGPY…WMIM), 84–104 (LSAM…YFVV), 138–158 (IISG…GFVS), 173–193 (FGLI…GYLA), 199–219 (FFQG…AMMN), 239–259 (LFKG…LGYF), 285–305 (ISWM…GIAF), 326–346 (VLFH…AIMS), 380–400 (FVMI…AIAW), 409–429 (LVGN…LFAL), 437–457 (AGAV…IAWI), and 466–486 (IFGL…TYVV).

The protein belongs to the sodium:solute symporter (SSF) (TC 2.A.21) family.

Its subcellular location is the cell membrane. It catalyses the reaction L-proline(in) + Na(+)(in) = L-proline(out) + Na(+)(out). Functionally, catalyzes the sodium-dependent uptake of extracellular L-proline. Since most S.aureus strains are L-proline auxotrophs, this transporter may aid the bacterial persistence during an infection of tissues with low proline concentrations. This Staphylococcus aureus protein is Sodium/proline symporter.